A 603-amino-acid chain; its full sequence is Sabinene hydrate synthase, chloroplastic (603 aa).

The transit peptide at 1–47 (MSTISINHVGLLRNPLHGKSKRASINKSWSLCLPRSSSASRLVKPCR) directs the protein to the chloroplast. D357 and D361 together coordinate Mn(2+). A DDXXD motif motif is present at residues 357–361 (DDVYD). Homodimerization regions lie at residues 363-369 (YGTLDEL) and 435-472 (EAEW…VSIP). Mn(2+) is bound by residues D501 and E509.

This sequence belongs to the terpene synthase family. In terms of assembly, homodimer. It depends on Mn(2+) as a cofactor. Mg(2+) is required as a cofactor.

It is found in the plastid. Its subcellular location is the chloroplast. The catalysed reaction is (2E)-geranyl diphosphate + H2O = sabinene hydrate + diphosphate. It participates in secondary metabolite biosynthesis; terpenoid biosynthesis. Involved in the biosynthesis of phenolic monoterpenes natural products. Monoterpene synthase which catalyzes the conversion of geranyl diphosphate (GPP) to sabinene hydrate, mainly (Z)-sabinene hydrate and to a lower extent (E)-sabinene hydrate, and the formation of minor amounts and traces of several other monoterpenes (e.g. mainly alpha-thujene, alpha-pinene and myrcene). This is Sabinene hydrate synthase, chloroplastic from Thymus vulgaris (Thyme).